Here is a 232-residue protein sequence, read N- to C-terminus: Myb-related protein 308 (232 aa).

HTH myb-type domains lie at 9-61 and 62-116; these read KAHT…INYL and RPDL…RRKL. 2 consecutive DNA-binding regions (H-T-H motif) follow at residues 37 to 61 and 89 to 112; these read WRSL…INYL and WSLI…NTHI.

As to expression, expressed in roots, stems, leaves, seed pods and flowers.

The protein resides in the nucleus. Functionally, transcription factor. This chain is Myb-related protein 308, found in Antirrhinum majus (Garden snapdragon).